A 291-amino-acid chain; its full sequence is tRNA dimethylallyltransferase (291 aa).

Residue 11-18 (GPTASGKS) participates in ATP binding. 13-18 (TASGKS) serves as a coordination point for substrate. Positions 42 to 45 (DSMQ) are interaction with substrate tRNA.

Belongs to the IPP transferase family. In terms of assembly, monomer. Mg(2+) is required as a cofactor.

The enzyme catalyses adenosine(37) in tRNA + dimethylallyl diphosphate = N(6)-dimethylallyladenosine(37) in tRNA + diphosphate. Its function is as follows. Catalyzes the transfer of a dimethylallyl group onto the adenine at position 37 in tRNAs that read codons beginning with uridine, leading to the formation of N6-(dimethylallyl)adenosine (i(6)A). The sequence is that of tRNA dimethylallyltransferase from Rubrobacter xylanophilus (strain DSM 9941 / JCM 11954 / NBRC 16129 / PRD-1).